The sequence spans 722 residues: ORC ubiquitin ligase 1 (722 aa).

The RING-type; degenerate zinc-finger motif lies at 18-56 (CHICLGKVRQPVVCTNNHVFCSICIDLWLKNNSQCPACR). 2 coiled-coil regions span residues 87-129 (LRKT…TILD) and 157-267 (VVEW…KEDV). Serine 210 is modified (phosphoserine). The interval 273–359 (RAPSADSKGP…RLGARETPMD (87 aa)) is disordered. The segment covering 302-319 (AGSASASHLASPSSSRLA) has biased composition (low complexity). Polar residues predominate over residues 323–338 (SVRQESTSRTEPNCPQ). Residues 339–359 (NKDRYPKPTEPRLGARETPMD) show a composition bias toward basic and acidic residues. Phosphoserine is present on residues serine 522, serine 549, serine 557, serine 564, and serine 566. Residues 541–555 (MSESDNSKSPCNNGF) are compositionally biased toward polar residues. Disordered stretches follow at residues 541–585 (MSES…GSKL) and 691–722 (VPEKRSKNGNQSTKRKIQSSLANASPSKATKS). Residues 571–581 (EFLEEPDKLQE) show a composition bias toward basic and acidic residues. The span at 698–722 (NGNQSTKRKIQSSLANASPSKATKS) shows a compositional bias: polar residues. A phosphoserine mark is found at serine 715 and serine 717.

Associates with ORC complex. Binds to chromatin; association is cell cycle-regulated, absent from mitotic chromosomes, is associated with chromatin from G1 and partially released from chromatin from mid S-phase. In terms of processing, auto-ubiquitinated.

The protein resides in the chromosome. The enzyme catalyses S-ubiquitinyl-[E2 ubiquitin-conjugating enzyme]-L-cysteine + [acceptor protein]-L-lysine = [E2 ubiquitin-conjugating enzyme]-L-cysteine + N(6)-ubiquitinyl-[acceptor protein]-L-lysine.. E3 ubiquitin ligase essential for DNA replication origin activation during S phase. Acts as a replication origin selector which selects the origins to be fired and catalyzes the multi-mono-ubiquitination of a subset of chromatin-bound ORC3 and ORC5 during S-phase. In Mus musculus (Mouse), this protein is ORC ubiquitin ligase 1.